Consider the following 720-residue polypeptide: Photosystem I P700 chlorophyll a apoprotein A1 (720 aa).

The next 8 membrane-spanning stretches (helical) occupy residues 62–85, 148–171, 186–210, 282–300, 337–360, 376–402, 424–446, and 522–540; these read IFSA…FHGA, LYCT…FHYH, LNHH…HVSL, IVHH…GHMY, WHAQ…HHMY, LSLF…IFLV, AIIS…LYIH, and FLVH…LILL. 2 residues coordinate [4Fe-4S] cluster: Cys-564 and Cys-573. A run of 2 helical transmembrane segments spans residues 580-601 and 655-677; these read HVFL…HFSW and LSAY…MFLF. His-666 contacts chlorophyll a'. Chlorophyll a is bound by residues Met-674 and Tyr-682. Position 683 (Trp-683) interacts with phylloquinone. Residues 715 to 720 form a helical membrane-spanning segment; it reads AVGVAH.

The protein belongs to the PsaA/PsaB family. In terms of assembly, the PsaA/B heterodimer binds the P700 chlorophyll special pair and subsequent electron acceptors. PSI consists of a core antenna complex that captures photons, and an electron transfer chain that converts photonic excitation into a charge separation. The eukaryotic PSI reaction center is composed of at least 11 subunits. P700 is a chlorophyll a/chlorophyll a' dimer, A0 is one or more chlorophyll a, A1 is one or both phylloquinones and FX is a shared 4Fe-4S iron-sulfur center. serves as cofactor.

It is found in the plastid. It localises to the chloroplast thylakoid membrane. It catalyses the reaction reduced [plastocyanin] + hnu + oxidized [2Fe-2S]-[ferredoxin] = oxidized [plastocyanin] + reduced [2Fe-2S]-[ferredoxin]. Its function is as follows. PsaA and PsaB bind P700, the primary electron donor of photosystem I (PSI), as well as the electron acceptors A0, A1 and FX. PSI is a plastocyanin-ferredoxin oxidoreductase, converting photonic excitation into a charge separation, which transfers an electron from the donor P700 chlorophyll pair to the spectroscopically characterized acceptors A0, A1, FX, FA and FB in turn. Oxidized P700 is reduced on the lumenal side of the thylakoid membrane by plastocyanin. The sequence is that of Photosystem I P700 chlorophyll a apoprotein A1 from Ephedra tweediana (Vining horsetail).